We begin with the raw amino-acid sequence, 347 residues long: Epimerase family protein SDR39U1 homolog, chloroplastic (347 aa).

The N-terminal 37 residues, 1–37, are a transit peptide targeting the chloroplast; the sequence is MELLCSPTSLSSSFALSSALLVPRSFSMPGTRRFMVL. NADP(+) is bound by residues 54-57, 76-77, 115-119, and arginine 136; these read TGFI, TR, and LAGLP.

As to quaternary structure, can form homodimers. Expressed in leaves, stems and flower buds.

Its subcellular location is the plastid. The protein resides in the chloroplast inner membrane. It is found in the chloroplast. In terms of biological role, putative NADP-dependent oxidoreductase that acts as a positive regulator of chloroplast division. May play a role at an early stage of the division process. The protein is Epimerase family protein SDR39U1 homolog, chloroplastic of Arabidopsis thaliana (Mouse-ear cress).